A 206-amino-acid polypeptide reads, in one-letter code: Small ribosomal subunit protein uS4 (206 aa).

Residues 96 to 158 enclose the S4 RNA-binding domain; it reads GRLDNVVYRM…AKQQSRIKAA (63 aa).

Belongs to the universal ribosomal protein uS4 family. As to quaternary structure, part of the 30S ribosomal subunit. Contacts protein S5. The interaction surface between S4 and S5 is involved in control of translational fidelity.

Its function is as follows. One of the primary rRNA binding proteins, it binds directly to 16S rRNA where it nucleates assembly of the body of the 30S subunit. Functionally, with S5 and S12 plays an important role in translational accuracy. The sequence is that of Small ribosomal subunit protein uS4 from Vibrio atlanticus (strain LGP32) (Vibrio splendidus (strain Mel32)).